The primary structure comprises 134 residues: 6,7-dimethyl-8-ribityllumazine synthase (134 aa).

5-amino-6-(D-ribitylamino)uracil contacts are provided by residues F12, 44 to 46 (VFD), and 68 to 70 (SVI). 73–74 (ET) is a (2S)-2-hydroxy-3-oxobutyl phosphate binding site. The active-site Proton donor is H76. L101 contributes to the 5-amino-6-(D-ribitylamino)uracil binding site. R116 contacts (2S)-2-hydroxy-3-oxobutyl phosphate.

It belongs to the DMRL synthase family.

It carries out the reaction (2S)-2-hydroxy-3-oxobutyl phosphate + 5-amino-6-(D-ribitylamino)uracil = 6,7-dimethyl-8-(1-D-ribityl)lumazine + phosphate + 2 H2O + H(+). The protein operates within cofactor biosynthesis; riboflavin biosynthesis; riboflavin from 2-hydroxy-3-oxobutyl phosphate and 5-amino-6-(D-ribitylamino)uracil: step 1/2. In terms of biological role, catalyzes the formation of 6,7-dimethyl-8-ribityllumazine by condensation of 5-amino-6-(D-ribitylamino)uracil with 3,4-dihydroxy-2-butanone 4-phosphate. This is the penultimate step in the biosynthesis of riboflavin. This Methanosarcina acetivorans (strain ATCC 35395 / DSM 2834 / JCM 12185 / C2A) protein is 6,7-dimethyl-8-ribityllumazine synthase.